The sequence spans 349 residues: Flavonol synthase/flavanone 3-hydroxylase (349 aa).

The 98-residue stretch at aspartate 213 to proline 310 folds into the Fe2OG dioxygenase domain. Residues histidine 238, aspartate 240, and histidine 291 each coordinate Fe cation.

This sequence belongs to the iron/ascorbate-dependent oxidoreductase family. It depends on Fe cation as a cofactor. Requires L-ascorbate as cofactor.

The protein resides in the cytoplasm. The catalysed reaction is a (2R,3R)-dihydroflavonol + 2-oxoglutarate + O2 = a flavonol + succinate + CO2 + H2O. It carries out the reaction a (2S)-flavan-4-one + 2-oxoglutarate + O2 = a (2R,3R)-dihydroflavonol + succinate + CO2. It functions in the pathway secondary metabolite biosynthesis; flavonoid biosynthesis. Catalyzes the formation of flavonols from dihydroflavonols. It can act on dihydrokaempferol to produce kaempferol, on dihydroquercetin to produce quercitin and on dihydromyricetin to produce myricetin. This is Flavonol synthase/flavanone 3-hydroxylase from Solanum tuberosum (Potato).